A 227-amino-acid polypeptide reads, in one-letter code: Cytidylate kinase (227 aa).

Residue 12–20 coordinates ATP; that stretch reads GPSGAGKGT.

The protein belongs to the cytidylate kinase family. Type 1 subfamily.

It is found in the cytoplasm. The catalysed reaction is CMP + ATP = CDP + ADP. It catalyses the reaction dCMP + ATP = dCDP + ADP. The sequence is that of Cytidylate kinase from Photorhabdus laumondii subsp. laumondii (strain DSM 15139 / CIP 105565 / TT01) (Photorhabdus luminescens subsp. laumondii).